A 371-amino-acid polypeptide reads, in one-letter code: Photosynthetic reaction center cytochrome c subunit (371 aa).

Met-114, Cys-127, Cys-130, His-131, Met-153, His-167, Cys-178, Cys-181, His-182, Met-267, Cys-278, Cys-281, His-282, Cys-339, Cys-342, and His-343 together coordinate heme.

In terms of assembly, component of the photosynthetic reaction center composed of protein subunits L (PufL), M (PufM), H (PuhA) and cytochrome C (PufC). The reaction center interacts with light-harvesting antenna complex LH1. Post-translationally, binds 4 heme groups per subunit.

The protein resides in the cellular chromatophore membrane. Its function is as follows. The reaction center of purple bacteria contains a tightly bound cytochrome molecule which re-reduces the photo oxidized primary electron donor. This is Photosynthetic reaction center cytochrome c subunit (pufC) from Roseobacter denitrificans (strain ATCC 33942 / OCh 114) (Erythrobacter sp. (strain OCh 114)).